The primary structure comprises 120 residues: NAD(P)H-quinone oxidoreductase subunit 3, chloroplastic (120 aa).

The next 3 membrane-spanning stretches (helical) occupy residues 9–29 (IFWA…LISG), 64–84 (MFAL…PWAM), and 88–108 (VLGV…IIGS).

It belongs to the complex I subunit 3 family. As to quaternary structure, NDH is composed of at least 16 different subunits, 5 of which are encoded in the nucleus.

It localises to the plastid. The protein localises to the chloroplast thylakoid membrane. The catalysed reaction is a plastoquinone + NADH + (n+1) H(+)(in) = a plastoquinol + NAD(+) + n H(+)(out). The enzyme catalyses a plastoquinone + NADPH + (n+1) H(+)(in) = a plastoquinol + NADP(+) + n H(+)(out). NDH shuttles electrons from NAD(P)H:plastoquinone, via FMN and iron-sulfur (Fe-S) centers, to quinones in the photosynthetic chain and possibly in a chloroplast respiratory chain. The immediate electron acceptor for the enzyme in this species is believed to be plastoquinone. Couples the redox reaction to proton translocation, and thus conserves the redox energy in a proton gradient. The protein is NAD(P)H-quinone oxidoreductase subunit 3, chloroplastic of Drimys granadensis.